Here is a 99-residue protein sequence, read N- to C-terminus: Protein RnfH (99 aa).

This sequence belongs to the UPF0125 (RnfH) family.

In Tolumonas auensis (strain DSM 9187 / NBRC 110442 / TA 4), this protein is Protein RnfH.